Reading from the N-terminus, the 467-residue chain is MATGKIVQIIGAVVDVEFPQSEVPSVYDALNVVDSKERLVLEVQQQLGGGVIRAIVMGSSDGLRRGMTVQNTGAPISVPVGTKTLGRIMNVLGDAIDERGDIGAEEVYSIHRPAPSYEEQSSATELLETGVKVIDLICPFAKGGKIGLFGGAGVGKTVNMMELINNIALQHSGLSVFAGVGERTREGNDFYHEMQEAGVVNVEQPELSKVAMVYGQMNEPPGNRLRVALTGLTMAEKFRDEGRDVLLFIDNIYRYTLAGTEVSALLGRMPSAVGYQPTLAEEMGVLQERITSTKKGSITSVQAVYVPADDLTDPSPATTFAHLDATVVLNRNIAAMGLYPAIDPLDSTSRQLDPLVVGQEHYDVARGVQATLQRYKELKDIIAILGMDELSEADKQVVARARKIERFLTQPYHVAEVFTGDPGVYVPLKETLRGFKGLLAGDYDDIPEQAFMYCGTIDDAIENAKKL.

Position 150–157 (150–157 (GGAGVGKT)) interacts with ATP.

Belongs to the ATPase alpha/beta chains family. In terms of assembly, F-type ATPases have 2 components, CF(1) - the catalytic core - and CF(0) - the membrane proton channel. CF(1) has five subunits: alpha(3), beta(3), gamma(1), delta(1), epsilon(1). CF(0) has three main subunits: a(1), b(2) and c(9-12). The alpha and beta chains form an alternating ring which encloses part of the gamma chain. CF(1) is attached to CF(0) by a central stalk formed by the gamma and epsilon chains, while a peripheral stalk is formed by the delta and b chains.

It localises to the cell inner membrane. The enzyme catalyses ATP + H2O + 4 H(+)(in) = ADP + phosphate + 5 H(+)(out). Its function is as follows. Produces ATP from ADP in the presence of a proton gradient across the membrane. The catalytic sites are hosted primarily by the beta subunits. This Vibrio cholerae serotype O1 (strain ATCC 39541 / Classical Ogawa 395 / O395) protein is ATP synthase subunit beta.